Reading from the N-terminus, the 90-residue chain is Barrier-to-autointegration factor B (90 aa).

It belongs to the BAF family. Homodimer. Interacts with nemp1a and nemp1b.

The protein resides in the nucleus. The protein localises to the chromosome. It localises to the nucleus envelope. Its subcellular location is the cytoplasm. Its function is as follows. Non-specific DNA-binding protein that plays key roles in mitotic nuclear reassembly, chromatin organization, DNA damage response, gene expression and intrinsic immunity against foreign DNA. Contains two non-specific double-stranded DNA (dsDNA)-binding sites which promote DNA cross-bridging. Plays a key role in nuclear membrane reformation at the end of mitosis by driving formation of a single nucleus in a spindle-independent manner. Transiently cross-bridges anaphase chromosomes via its ability to bridge distant DNA sites, leading to the formation of a dense chromatin network at the chromosome ensemble surface that limits membranes to the surface. Also acts as a negative regulator of innate immune activation by restricting CGAS activity toward self-DNA upon acute loss of nuclear membrane integrity. Outcompetes CGAS for DNA-binding, thereby preventing CGAS activation and subsequent damaging autoinflammatory responses. Also involved in DNA damage response; acts by inhibiting the ADP-ribosyltransferase activity of PARP1. Involved in the recognition of exogenous dsDNA in the cytosol: associates with exogenous dsDNA immediately after its appearance in the cytosol at endosome breakdown and is required to avoid autophagy. This chain is Barrier-to-autointegration factor B (banf1-b), found in Xenopus laevis (African clawed frog).